The sequence spans 123 residues: Ig heavy chain V region HPCG14 (123 aa).

An Ig-like domain is found at 1–114 (EVKLVESGGG…GYDYWFDVWG (114 aa)).

This chain is Ig heavy chain V region HPCG14, found in Mus musculus (Mouse).